Reading from the N-terminus, the 201-residue chain is Retinol binding protein 4 (201 aa).

The first 18 residues, 1 to 18 (MAWVWALVLLAALGSARA), serve as a signal peptide directing secretion. Intrachain disulfides connect cysteine 22–cysteine 178, cysteine 88–cysteine 192, and cysteine 138–cysteine 147. Glutamine 116 lines the substrate pocket. Arginine 139 carries the post-translational modification Omega-N-methylarginine.

This sequence belongs to the calycin superfamily. Lipocalin family. Interacts with TTR. Interaction with TTR prevents its loss by filtration through the kidney glomeruli. Interacts with STRA6. In terms of tissue distribution, highly expressed in liver. Also expressed in adipose tissue. Expressed by endometrium from days 16-25 and by unattached chorioallantois from days 30-36 during pregnancy.

Its subcellular location is the secreted. In terms of biological role, retinol-binding protein that mediates retinol transport in blood plasma. Delivers retinol from the liver stores to the peripheral tissues. Transfers the bound all-trans retinol to STRA6, that then facilitates retinol transport across the cell membrane. In Felis catus (Cat), this protein is Retinol binding protein 4.